Reading from the N-terminus, the 270-residue chain is Urease accessory protein UreD (270 aa).

Belongs to the UreD family. UreD, UreF and UreG form a complex that acts as a GTP-hydrolysis-dependent molecular chaperone, activating the urease apoprotein by helping to assemble the nickel containing metallocenter of UreC. The UreE protein probably delivers the nickel.

The protein localises to the cytoplasm. Functionally, required for maturation of urease via the functional incorporation of the urease nickel metallocenter. The protein is Urease accessory protein UreD of Synechocystis sp. (strain ATCC 27184 / PCC 6803 / Kazusa).